The sequence spans 257 residues: Protein KlaA (257 aa).

Functionally, belongs to the kla operon, which is associated with cryptic tellurite resistance, and IncW plasmid fertility inhibition. The chain is Protein KlaA (klaA) from Escherichia coli.